Here is an 818-residue protein sequence, read N- to C-terminus: Myosin-A (818 aa).

Residue S19 is modified to Phosphoserine; by PKG. One can recognise a Myosin motor domain in the interval 97 to 771; that stretch reads MSFGDIGLLN…GAKILTKIQR (675 aa). 191-198 lines the ATP pocket; the sequence is GESGAGKT. Residues 661–671 form an actin-binding region; sequence PHFIRCIKPNE. The tail stretch occupies residues 773–818; it reads KLVEWENCVSVIEAAILKHKYKQKVNKNIPSLLRVQAHIRKKMVAQ.

This sequence belongs to the TRAFAC class myosin-kinesin ATPase superfamily. Myosin family. In terms of assembly, component of the glideosome complex composed of GAP50, GAP45, MTIP and MyoA; the complex is formed during the late schizont stage and in merozoites. MyoA, MTIP and GAP45 probably form an initial complex in the cytoplasm which is then recruited to the outer face of the inner membrane complex via the interaction with GAP50. Interacts with ACT1.

It localises to the cell membrane. In terms of biological role, myosins are actin-based motor molecules with ATPase activity. Unconventional myosins serve in intracellular movements. Their highly divergent tails are presumed to bind to membranous compartments, which would be moved relative to actin filaments. In Plasmodium falciparum (isolate 3D7), this protein is Myosin-A.